The sequence spans 197 residues: Holliday junction branch migration complex subunit RuvA (197 aa).

Positions 1–64 (MIASVRGVVQ…EDMLALFGFS (64 aa)) are domain I. A domain II region spans residues 65–143 (SPAQRALFEL…VATISPQLST (79 aa)). The segment at 144–153 (NPGLLALNTE) is flexible linker. The segment at 153–197 (ELIDILTSLGYSTTEAQAALNALPADAPADTEERLRLALQYFGGV) is domain III.

This sequence belongs to the RuvA family. As to quaternary structure, homotetramer. Forms an RuvA(8)-RuvB(12)-Holliday junction (HJ) complex. HJ DNA is sandwiched between 2 RuvA tetramers; dsDNA enters through RuvA and exits via RuvB. An RuvB hexamer assembles on each DNA strand where it exits the tetramer. Each RuvB hexamer is contacted by two RuvA subunits (via domain III) on 2 adjacent RuvB subunits; this complex drives branch migration. In the full resolvosome a probable DNA-RuvA(4)-RuvB(12)-RuvC(2) complex forms which resolves the HJ.

The protein localises to the cytoplasm. Its function is as follows. The RuvA-RuvB-RuvC complex processes Holliday junction (HJ) DNA during genetic recombination and DNA repair, while the RuvA-RuvB complex plays an important role in the rescue of blocked DNA replication forks via replication fork reversal (RFR). RuvA specifically binds to HJ cruciform DNA, conferring on it an open structure. The RuvB hexamer acts as an ATP-dependent pump, pulling dsDNA into and through the RuvAB complex. HJ branch migration allows RuvC to scan DNA until it finds its consensus sequence, where it cleaves and resolves the cruciform DNA. This chain is Holliday junction branch migration complex subunit RuvA, found in Herpetosiphon aurantiacus (strain ATCC 23779 / DSM 785 / 114-95).